The chain runs to 475 residues: Coagulation factor X (475 aa).

The first 20 residues, 1 to 20, serve as a signal peptide directing secretion; the sequence is MAGRLLLLLLCAALPDELRA. The propeptide occupies 21–40; sequence EGGVFIKKESADKFLERTKR. A Gla domain is found at 41-85; that stretch reads ANSFLEEMKQGNIERECNEERCSKEEAREAFEDNEKTEEFWNIYV. A 4-carboxyglutamate mark is found at Glu-46, Glu-47, Glu-54, Glu-56, Glu-59, Glu-60, Glu-65, Glu-66, Glu-69, Glu-72, and Glu-79. A disulfide bridge links Cys-57 with Cys-62. Residues 86–122 form the EGF-like 1; calcium-binding domain; sequence DGDQCSSNPCHYGGQCKDGLGSYTCSCLDGYQGKNCE. Disulfide bonds link Cys-90/Cys-101, Cys-95/Cys-110, Cys-112/Cys-121, Cys-129/Cys-140, Cys-136/Cys-152, Cys-154/Cys-167, Cys-175/Cys-348, Cys-247/Cys-252, Cys-267/Cys-283, Cys-396/Cys-410, and Cys-421/Cys-449. Position 103 is a (3R)-3-hydroxyaspartate (Asp-103). The 44-residue stretch at 125-168 folds into the EGF-like 2 domain; sequence IPKYCKINNGDCEQFCSIKKSVQKDVVCSCTSGYELAEDGKQCV. The propeptide at 186-240 is activation peptide; the sequence is SVILPTNSNTNATSDQDVPSTNGSILEEVFTTTTESPTPPPRNGSSITDPNVDTR. Asn-196, Asn-207, and Asn-228 each carry an N-linked (GlcNAc...) asparagine glycan. The interval 216–237 is disordered; sequence TTTTESPTPPPRNGSSITDPNV. The 233-residue stretch at 241-473 folds into the Peptidase S1 domain; that stretch reads IVGGDECRPG…FLRWVRTVMR (233 aa). His-282 (charge relay system) is an active-site residue. A glycan (N-linked (GlcNAc...) asparagine) is linked at Asn-285. Asp-328 serves as the catalytic Charge relay system. The active-site Charge relay system is Ser-425.

This sequence belongs to the peptidase S1 family. As to quaternary structure, the two chains are formed from a single-chain precursor by the excision of two Arg residues and are held together by 1 or more disulfide bonds. The vitamin K-dependent, enzymatic carboxylation of some glutamate residues allows the modified protein to bind calcium. Post-translationally, the activation peptide is cleaved by factor IXa (in the intrinsic pathway), or by factor VIIa (in the extrinsic pathway). In terms of processing, the iron and 2-oxoglutarate dependent 3-hydroxylation of aspartate and asparagine is (R) stereospecific within EGF domains. As to expression, liver and chorioallantoic membrane.

The protein localises to the secreted. It catalyses the reaction Selective cleavage of Arg-|-Thr and then Arg-|-Ile bonds in prothrombin to form thrombin.. In terms of biological role, factor Xa is a vitamin K-dependent glycoprotein that converts prothrombin to thrombin in the presence of factor Va, calcium and phospholipid during blood clotting. VAP cleaves the fusion proteins of Sendai virus, NDV, and influenza virus a at a specific single arginine-containing site, and plays a key role in the viral spreading in the allantoic sac. The polypeptide is Coagulation factor X (F10) (Gallus gallus (Chicken)).